The chain runs to 800 residues: General transcription and DNA repair factor IIH helicase/translocase subunit XPB (800 aa).

The disordered stretch occupies residues 1 to 27 (MSSGDSNLKRRRGGNTGQSSKSYNTWT). The segment covering 17 to 27 (GQSSKSYNTWT) has biased composition (polar residues). A Helicase ATP-binding domain is found at 329–491 (MFGNGRARSG…DLNFLIGPKL (163 aa)). An ATP-binding site is contributed by 342–349 (LPCGAGKS). A DEVH box motif is present at residues 444–447 (DEVH). The Helicase C-terminal domain maps to 546–704 (RACEYLIRFH…ELPGIDQEVN (159 aa)). Residues 743–769 (GAKKSKSSAPTVSRTTGGSTRALSGGN) form a disordered region. The span at 749–764 (SSAPTVSRTTGGSTRA) shows a compositional bias: polar residues.

The protein belongs to the helicase family. RAD25/XPB subfamily. As to quaternary structure, component of the 7-subunit TFIIH core complex composed of XPB/repB, XPD/repD, gtf2h1, gtf2h2, gtf2h3, gtf2h4 and gtf2h5, which is active in NER. The core complex associates with the 3-subunit CDK-activating kinase (CAK) module composed of cycH/cyclin H, cdk7 and mnat1 to form the 10-subunit holoenzyme (holo-TFIIH) active in transcription.

It is found in the nucleus. The enzyme catalyses Couples ATP hydrolysis with the unwinding of duplex DNA by translocating in the 3'-5' direction.. The catalysed reaction is ATP + H2O = ADP + phosphate + H(+). Its function is as follows. ATP-dependent 3'-5' DNA helicase/translocase; binds dsDNA rather than ssDNA, unzipping it in a translocase rather than classical helicase activity. Component of the general transcription and DNA repair factor IIH (TFIIH) core complex. When complexed to CDK-activating kinase (CAK), involved in RNA transcription by RNA polymerase II. The ATPase activity of XPB/ERCC3, but not its helicase activity, is required for DNA opening; it may wrap around the damaged DNA wedging it open, causing localized melting and twisting that allows XPD/ERCC2 helicase to anchor. The ATP-dependent helicase activity of XPB/ERCC3 may be required for promoter escape. Also involved in transcription-coupled nucleotide excision repair (NER) of damaged DNA. In NER, TFIIH acts by opening DNA around the lesion to allow the excision of the damaged oligonucleotide and its replacement by a new DNA fragment. The structure of the TFIIH transcription complex differs from the NER-TFIIH complex. This chain is General transcription and DNA repair factor IIH helicase/translocase subunit XPB, found in Dictyostelium discoideum (Social amoeba).